A 332-amino-acid polypeptide reads, in one-letter code: UDP-N-acetylenolpyruvoylglucosamine reductase (332 aa).

Residues 15 to 184 enclose the FAD-binding PCMH-type domain; sequence IDVSAACFLE…TYVSFRLSKR (170 aa). The active site involves Arg160. Residue Ser232 is the Proton donor of the active site. The active site involves Glu328.

This sequence belongs to the MurB family. Requires FAD as cofactor.

Its subcellular location is the cytoplasm. The catalysed reaction is UDP-N-acetyl-alpha-D-muramate + NADP(+) = UDP-N-acetyl-3-O-(1-carboxyvinyl)-alpha-D-glucosamine + NADPH + H(+). The protein operates within cell wall biogenesis; peptidoglycan biosynthesis. Its function is as follows. Cell wall formation. This Bacteroides fragilis (strain ATCC 25285 / DSM 2151 / CCUG 4856 / JCM 11019 / LMG 10263 / NCTC 9343 / Onslow / VPI 2553 / EN-2) protein is UDP-N-acetylenolpyruvoylglucosamine reductase.